The following is a 119-amino-acid chain: Ribonuclease P protein component (119 aa).

Belongs to the RnpA family. Consists of a catalytic RNA component (M1 or rnpB) and a protein subunit.

It catalyses the reaction Endonucleolytic cleavage of RNA, removing 5'-extranucleotides from tRNA precursor.. Functionally, RNaseP catalyzes the removal of the 5'-leader sequence from pre-tRNA to produce the mature 5'-terminus. It can also cleave other RNA substrates such as 4.5S RNA. The protein component plays an auxiliary but essential role in vivo by binding to the 5'-leader sequence and broadening the substrate specificity of the ribozyme. This Borreliella burgdorferi (strain ZS7) (Borrelia burgdorferi) protein is Ribonuclease P protein component.